A 403-amino-acid chain; its full sequence is MDRLTVRELSPEEKKVLVRVDFNVPIKDGKILDDIRIRSAMPTIHYLLQKRAAVILMSHLGRPQGKGFEEKYSLQPVVEVLEGYLGHHVPLAPDCVGEVARQAVAQISPGRVLLLENLRFHPGEEHPEEHPAFAAELSSYGDFYVNDAFGTSHRKHASVYTVPQAFPGRSAAGLLMEKELEFLGQHLLISPKRPFTAILGGSKVSSKIGVIEALLSQVDNLLLAGGMGFTFLKALGKSVGNSLVEESGIELARRVLHIAQQRNVRIVLPIDVKVAKACTPAVSWTEVSIDQGIPQDLEGLDIGTKTVQEFCKIIDASSTIFWNGPVGVYEVPPFDQGSMAIANCLARHPSAITVVGGGDAAAVVALAGCTAQVSHVSTGGGASLEFLEKGFLPGTEVLSPSQE.

Substrate contacts are provided by residues Asp-21–Asn-23, Arg-36, His-59–Arg-62, Arg-119, and Arg-154. ATP-binding positions include Lys-207, Gly-299, Glu-330, and Gly-357–Ala-360.

It belongs to the phosphoglycerate kinase family. In terms of assembly, monomer.

It is found in the cytoplasm. The enzyme catalyses (2R)-3-phosphoglycerate + ATP = (2R)-3-phospho-glyceroyl phosphate + ADP. The protein operates within carbohydrate degradation; glycolysis; pyruvate from D-glyceraldehyde 3-phosphate: step 2/5. The polypeptide is Phosphoglycerate kinase (Chlamydia abortus (strain DSM 27085 / S26/3) (Chlamydophila abortus)).